The chain runs to 95 residues: Immunogenic miracidial antigen 8C (95 aa).

Residues 1–15 (EFTISFSSPVISTGQ) show a composition bias toward polar residues. Residues 1-95 (EFTISFSSPV…PKKYGSGHKY (95 aa)) form a disordered region. Acidic residues predominate over residues 20 to 41 (GDEDYHDGDDDVDYTDDVDDVD). A compositionally biased stretch (polar residues) spans 45-59 (GSPSQLLQGGYQRNQ).

Belongs to the immunogenic miracidial antigen family.

This Schistosoma japonicum (Blood fluke) protein is Immunogenic miracidial antigen 8C (8C).